Reading from the N-terminus, the 425-residue chain is UPF0597 protein KPN78578_43500 (425 aa).

This sequence belongs to the UPF0597 family.

In Klebsiella pneumoniae subsp. pneumoniae (strain ATCC 700721 / MGH 78578), this protein is UPF0597 protein KPN78578_43500.